A 283-amino-acid polypeptide reads, in one-letter code: MNWTGLYTLLSGVNRHSTAIGRVWLSVIFIFRIMVLVVAAESVWGDEKSSFICNTLQPGCNSVCYDHFFPISHVRLWSLQLILVSTPALLVAMHVAHQQHIEKKMLRLEGHGDPIHLEEVKRHKVHISGTLWWTYVISVVFRLLFEAAFMYVFYLLYPGYAMVRLVKCDAYPCPNTVDCFVSRPTEKTVFTVFMLAASGICIILNVAEVVYLIVRACARRAQRRSNPPSRKGSGFGHRLSPEYKQNEINKLLSEQDGSLKDILRRSPGTGAGLAEKSDRCSAC.

Residues 1-22 (MNWTGLYTLLSGVNRHSTAIGR) are Cytoplasmic-facing. The chain crosses the membrane as a helical span at residues 23–45 (VWLSVIFIFRIMVLVVAAESVWG). Residues 46–75 (DEKSSFICNTLQPGCNSVCYDHFFPISHVR) are Extracellular-facing. Residues 76–95 (LWSLQLILVSTPALLVAMHV) form a helical membrane-spanning segment. Over 96–130 (AHQQHIEKKMLRLEGHGDPIHLEEVKRHKVHISGT) the chain is Cytoplasmic. Residues 131–153 (LWWTYVISVVFRLLFEAAFMYVF) traverse the membrane as a helical segment. The Extracellular portion of the chain corresponds to 154–191 (YLLYPGYAMVRLVKCDAYPCPNTVDCFVSRPTEKTVFT). The chain crosses the membrane as a helical span at residues 192–214 (VFMLAASGICIILNVAEVVYLIV). Residues 215 to 283 (RACARRAQRR…AEKSDRCSAC (69 aa)) lie on the Cytoplasmic side of the membrane. Residues Ser-233, Ser-258, Ser-266, and Ser-277 each carry the phosphoserine modification.

This sequence belongs to the connexin family. Beta-type (group I) subfamily. A connexon is composed of a hexamer of connexins. Interacts with CNST.

It is found in the cell membrane. The protein localises to the cell junction. The protein resides in the gap junction. Its function is as follows. One gap junction consists of a cluster of closely packed pairs of transmembrane channels, the connexons, through which materials of low MW diffuse from one cell to a neighboring cell. The chain is Gap junction beta-1 protein (GJB1) from Equus caballus (Horse).